A 594-amino-acid chain; its full sequence is Protein wntless (594 aa).

Residues 1 to 13 (MSGTILENLSGRK) lie on the Cytoplasmic side of the membrane. A helical transmembrane segment spans residues 14-34 (LSILVATLLLCQVLCFLLGGL). Residues 35–239 (YAPLPAGHVT…AIHQNGGFTQ (205 aa)) are Lumenal-facing. N-linked (GlcNAc...) asparagine glycosylation is present at asparagine 58. Residues 240–260 (IWLLLKTMLFPFVVGIMIWFW) form a helical membrane-spanning segment. At 261-270 (RRVHLLQRSP) the chain is on the cytoplasmic side. A helical transmembrane segment spans residues 271–291 (ALLEYMLIYLGAALTFLNLPL). Over 292-311 (EYLSLVYEMPYMLLLSDIRQ) the chain is Lumenal. A helical transmembrane segment spans residues 312 to 332 (GIFYAMLLTFWLVFAGEHMLI). Topologically, residues 333–344 (QDAPNKSTIRSR) are cytoplasmic. Residues 345 to 365 (YWKHLSAVVVGCISLFVFDIC) form a helical membrane-spanning segment. At 366–390 (ERGVQLRNPFYSIWTTPLGAKVAMT) the chain is on the lumenal side. A helical membrane pass occupies residues 391 to 411 (FIVLAGVSAAIYFLFLCYMIW). Over 412–473 (KVFRNIGDKR…ANESKGLIYR (62 aa)) the chain is Cytoplasmic. A helical transmembrane segment spans residues 474–494 (FKFLMLATLVCAALTVAGFIM). At 495–514 (GQMAEGQWDWNDNVAIQPTS) the chain is on the lumenal side. The helical transmembrane segment at 515 to 535 (AFLTGVYGMWNIYIFALLILY) threads the bilayer. The Cytoplasmic portion of the chain corresponds to 536–594 (APSHKQWPTMHHSDETTQSNENIVASAASEEIEFSHLPSDSNPSEISSLTSFTRKVAFD). Residues 571–594 (HLPSDSNPSEISSLTSFTRKVAFD) are disordered. A compositionally biased stretch (polar residues) spans 573–588 (PSDSNPSEISSLTSFT).

Belongs to the wntless family. In terms of assembly, interacts with wg; in the Golgi. Interacts with Vps35, a component of the retromer complex; wls stability is regulated by Vps35. As to expression, ubiquitously expressed in the wing imaginal disk, increased expression is observed in a stripe at the dorso-ventral boundary and other regions of the wing disk that express wg. Also expresses in the leg imaginal disk. During larval development, expression is seen in both motorneurons and muscle.

The protein resides in the presynaptic cell membrane. Its subcellular location is the postsynaptic cell membrane. It localises to the cell membrane. It is found in the endosome membrane. The protein localises to the endoplasmic reticulum membrane. The protein resides in the golgi apparatus membrane. A segment polarity gene required for wingless (wg)-dependent patterning processes, acting in both wg-sending cells and wg-target cells. In non-neuronal cells wls directs wg secretion. The wls traffic loop encompasses the Golgi, the cell surface, an endocytic compartment and a retrograde route leading back to the Golgi, and involves clathrin-mediated endocytosis and the retromer complex (a conserved protein complex consisting of Vps35 and Vps26). In neuronal cells (the larval motorneuron NMJ), the wg signal moves across the synapse via the release of wls-containing exosome-like vesicles. Postsynaptic wls is required for the trafficking of fz2 through the fz2-interacting protein Grip. This chain is Protein wntless, found in Drosophila melanogaster (Fruit fly).